We begin with the raw amino-acid sequence, 392 residues long: MSVIKMTDLDLAGKRVLIREDLNVPVKDGKVTSDARIRASLPTIEHAMKAGAKVMLMSHLGRPEEGVFSEEDSLKPVAEHLSGLLGKEVRLVRDYLDGVDVADGEVVLLENVRFNKGEKKNEEGLSRKYAALCDVYVMDAFGTAHRAQASTHGAGQYAPVACAGPLLAAELEALGKALDNPKRPLVAIVGGSKVSTKLTVLESLSKVVDQLIVGGGIANTFIAAQGHPVGKSLYEADLVDEAKRLMAAAKAKGGDIPVPTDVVTGKEFSESTPASTKRVSEVAADDMIFDVGPDTAASYADMLRKAGTIVWNGPVGVFEFDQFAAGTKALGEAIADSDGFSIAGGGDTLAAIDKYGLASRISYISTGGGAFLEFLEGKKLPAVAMLEERAKG.

Substrate contacts are provided by residues 21–23 (DLN), Arg36, 59–62 (HLGR), Arg113, and Arg146. ATP contacts are provided by residues Lys197, Glu319, and 345-348 (GGDT).

Belongs to the phosphoglycerate kinase family. In terms of assembly, monomer.

It is found in the cytoplasm. The catalysed reaction is (2R)-3-phosphoglycerate + ATP = (2R)-3-phospho-glyceroyl phosphate + ADP. Its pathway is carbohydrate degradation; glycolysis; pyruvate from D-glyceraldehyde 3-phosphate: step 2/5. In Thioalkalivibrio sulfidiphilus (strain HL-EbGR7), this protein is Phosphoglycerate kinase.